The primary structure comprises 1154 residues: Voltage-gated inwardly rectifying potassium channel KCNH2 (1154 aa).

Topologically, residues 1-403 (MPVRRGHVAP…RIHRWTILHY (403 aa)) are cytoplasmic. The PAS domain occupies 41 to 70 (VIYCNDGFCELCGYSRAEVMQRPCTCDFLH). One can recognise a PAC domain in the interval 92 to 144 (RKVEIAFYRKDGSCFLCLVDVVPVKNEDGAVIMFILNFEVVMEKDMVGSPARD). The segment at 233–312 (ALVGSGSPPA…ASTGAMHPLR (80 aa)) is disordered. Ser-239 is subject to Phosphoserine. Polar residues predominate over residues 258-269 (PDGSGSSCSLAR). Phosphoserine occurs at positions 283, 284, 320, and 351. A helical transmembrane segment spans residues 404 to 424 (SPFKAVWDWLILLLVIYTAVF). Residues 425 to 450 (TPYSAAFLLKETEEGSQAPDCGYACQ) are Extracellular-facing. Residues 451-471 (PLAVVDLIVDIMFIVDILINF) form a helical membrane-spanning segment. The Cytoplasmic segment spans residues 472 to 495 (RTTYVNANEEVVSHPGRIAVHYFK). A helical transmembrane segment spans residues 496 to 516 (GWFLIDMVAAIPFDLLIFGSG). At 517-520 (SEEL) the chain is on the extracellular side. A helical; Voltage-sensor transmembrane segment spans residues 521–541 (IGLLKTARLLRLVRVARKLDR). The Cytoplasmic segment spans residues 542 to 547 (YSEYGA). Residues 548-568 (AVLFLLMCTFALIAHWLACIW) form a helical membrane-spanning segment. The Extracellular segment spans residues 569–611 (YAIGNMEQPNMDSHIGWLHNLGDQIGKPYNSSGLGGPSIKDKY). Residues 612-632 (VTALYFTFSSLTSVGFGNVSP) constitute an intramembrane region (pore-forming). Positions 624–629 (SVGFGN) match the Selectivity filter motif. The Extracellular portion of the chain corresponds to 633-638 (NTNSEK). The helical transmembrane segment at 639–659 (IFSICVMLIGSLMYASIFGNV) threads the bilayer. The Cytoplasmic portion of the chain corresponds to 660-1154 (SAIIQRLYSG…LHRHGSDPGS (495 aa)). The tract at residues 742–842 (PFRGATKGCL…IHRDDLLEVL (101 aa)) is cNMP-binding domain. The segment at 870-985 (GSPGSTELEG…DVEKSSDTCN (116 aa)) is disordered. Phosphoserine occurs at positions 871 and 874. Residues 883-892 (RQRKRKLSFR) show a composition bias toward basic residues. The segment covering 916 to 927 (GPSGRGQQGGPW) has biased composition (gly residues). Residues 928 to 939 (GESLSSGPSSPE) are compositionally biased toward low complexity. Arg-1014 is subject to Omega-N-methylarginine. The stretch at 1037 to 1064 (RGDVESRLDALQRQLNRLETRLSADMAT) forms a coiled coil. The tract at residues 1125 to 1154 (DGPARRLSLPGQLGALTSQPLHRHGSDPGS) is disordered. A Phosphoserine modification is found at Ser-1132.

This sequence belongs to the potassium channel family. H (Eag) (TC 1.A.1.20) subfamily. Kv11.1/KCNH2 sub-subfamily. As to quaternary structure, the potassium channel is probably composed of a homo- or heterotetrameric complex of pore-forming alpha subunits that can associate with modulating beta subunits. Interacts with DNAJB12 and DNAJB14; chaperones DNAJB12 and DNAJB14 promote tetramerization. Heteromultimer with KCNH6/ERG2 and KCNH7/ERG3. Interacts with ALG10B. Forms a stable complex with KCNE1 or KCNE2, and that this heteromultimerization regulates Inward rectifier potassium channel activity. Interacts with CANX. The core-glycosylated, but not the fully glycosylated form interacts with RNF207. Interacts with NDFIP1 and NDFIP2; this interaction decreases the cell membrane expression by targeting KCNH2, through interaction with NEDD4L, for the degradation through the multivesicular bodies (MVBs)-lysosomal pathway. In terms of processing, phosphorylated on serine and threonine residues. Phosphorylation by PKA inhibits ion conduction.

Its subcellular location is the cell membrane. The catalysed reaction is K(+)(in) = K(+)(out). In terms of biological role, pore-forming (alpha) subunit of voltage-gated inwardly rectifying potassium channel. Characterized by unusual gating kinetics by producing relatively small outward currents during membrane depolarization and large inward currents during subsequent repolarization which reflect a rapid inactivation during depolarization and quick recovery from inactivation but slow deactivation (closing) during repolarization. Channel properties are modulated by cAMP and subunit assembly. Forms a stable complex with KCNE1 or KCNE2, and that this heteromultimerization regulates inward rectifier potassium channel activity. In Sus scrofa (Pig), this protein is Voltage-gated inwardly rectifying potassium channel KCNH2.